The following is a 367-amino-acid chain: Aldo-keto reductase AMT2 (367 aa).

Asp-76 is an NADP(+) binding site. The active-site Proton donor is Tyr-81. A substrate-binding site is contributed by His-173. Residues 203-204 (SS), Gln-229, 258-268 (GPLAAGKLARP), and 330-338 (SSVERMDEV) contribute to the NADP(+) site. Residues 346–367 (LSDEEESRLEDPYKAQPPQGHS) form a disordered region.

This sequence belongs to the aldo/keto reductase family.

It functions in the pathway mycotoxin biosynthesis. Functionally, aldo-keto reductase; part of the gene clusters that mediate the biosynthesis of AM-toxins, host-selective toxins (HSTs) causing Alternaria blotch on apple, a worldwide distributed disease. AM-toxins are cyclic depsipeptides containing the 3 residues 2-hydroxy-isovaleric acid (2-HIV), dehydroalanine, L-alanine which are common for all 3 AM-toxins I to III. The fourth precursor is L-alpha-amino-methoxyphenyl-valeric acid (L-Amv) for AM-toxin I, L-alpha-amino-phenyl-valeric acid (L-Apv) for AM-toxin II, and L-alpha-amino-hydroxyphenyl-valeric acid (L-Ahv) for AM-toxin III. AM-toxins have two target sites for affecting susceptible apple cells; they cause invagination of the plasma membrane and electrolyte loss and chloroplast disorganization. The non-ribosomal peptide synthetase AMT1 contains 4 catalytic modules and is responsible for activation of each residue in AM-toxin. The aldo-keto reductase AMT2 catalyzes the conversion of 2-keto-isovaleric acid (2-KIV) to 2-hydroxy-isovaleric acid (2-HIV), one of the precursor residues incorporated by AMT1 during AM-toxin biosynthesis, by reduction of its ketone to an alcohol. The cytochrome P450 monooxygenase AMT3 and the thioesterase AMT4 are also important for AM-toxin production, but their exact function within the AM-toxin biosynthesis are not known yet. Up to 21 proteins (including AMT1 to AMT4) are predicted to be involved in AM-toxin biosynthesis since their expression ishighly up-regulated in AM-toxin-producing cultures. The polypeptide is Aldo-keto reductase AMT2 (Alternaria alternata (Alternaria rot fungus)).